Reading from the N-terminus, the 336-residue chain is Eukaryotic translation initiation factor 3 subunit I (336 aa).

WD repeat units lie at residues 8-47, 50-91, 146-185, 190-229, and 287-326; these read GHER…RLGT, GHLG…KVWE, CTES…QLEN, EFDH…ILKT, and GHFG…FDFM.

This sequence belongs to the eIF-3 subunit I family. Component of the eukaryotic translation initiation factor 3 (eIF-3) complex.

The protein localises to the cytoplasm. In terms of biological role, component of the eukaryotic translation initiation factor 3 (eIF-3) complex, which is involved in protein synthesis of a specialized repertoire of mRNAs and, together with other initiation factors, stimulates binding of mRNA and methionyl-tRNAi to the 40S ribosome. The eIF-3 complex specifically targets and initiates translation of a subset of mRNAs involved in cell proliferation. The sequence is that of Eukaryotic translation initiation factor 3 subunit I (tif34) from Emericella nidulans (strain FGSC A4 / ATCC 38163 / CBS 112.46 / NRRL 194 / M139) (Aspergillus nidulans).